Here is a 743-residue protein sequence, read N- to C-terminus: Protein STB5 (743 aa).

Residues Cys22 to Cys49 constitute a DNA-binding region (zn(2)-C6 fungal-type). Disordered regions lie at residues Val81–Ala100 and Asn155–Asn249. Polar residues-rich tracts occupy residues Pro85–Ser99 and Asn155–Ile198. The span at Asn213–Thr238 shows a compositional bias: low complexity. Polar residues predominate over residues Pro239 to Asn249.

Its subcellular location is the nucleus. Functionally, binds to SIN3. In Saccharomyces cerevisiae (strain ATCC 204508 / S288c) (Baker's yeast), this protein is Protein STB5 (STB5).